A 184-amino-acid chain; its full sequence is Peptide deformylase (184 aa).

Residues Cys-92 and His-134 each contribute to the Fe cation site. Residue Glu-135 is part of the active site. Position 138 (His-138) interacts with Fe cation.

It belongs to the polypeptide deformylase family. Fe(2+) serves as cofactor.

It carries out the reaction N-terminal N-formyl-L-methionyl-[peptide] + H2O = N-terminal L-methionyl-[peptide] + formate. Its function is as follows. Removes the formyl group from the N-terminal Met of newly synthesized proteins. Requires at least a dipeptide for an efficient rate of reaction. N-terminal L-methionine is a prerequisite for activity but the enzyme has broad specificity at other positions. This chain is Peptide deformylase, found in Psychrobacter cryohalolentis (strain ATCC BAA-1226 / DSM 17306 / VKM B-2378 / K5).